Consider the following 315-residue polypeptide: Acetaldehyde dehydrogenase (315 aa).

Position 13 to 16 (13 to 16) interacts with NAD(+); that stretch reads SGNI. Cys-131 acts as the Acyl-thioester intermediate in catalysis. NAD(+)-binding positions include 163-171 and Asn-290; that span reads SAGPGTRAN.

This sequence belongs to the acetaldehyde dehydrogenase family.

The enzyme catalyses acetaldehyde + NAD(+) + CoA = acetyl-CoA + NADH + H(+). This Xanthobacter autotrophicus (strain ATCC BAA-1158 / Py2) protein is Acetaldehyde dehydrogenase.